We begin with the raw amino-acid sequence, 355 residues long: MAGRSAARRPRGDREPLGPRLRAPRPAREPRQSESRAERGLPPSQRSSVRSAASGHDRSTRGAPAGACKPRVKKKVRPRSSQSEKVGSSSRELTRSKKVTRSKNVTGTQVEEVTKIEEATQTEEVTVAEEVTQTDNMAKTEEMVQTEEMETPRLSVIVTHSNERYDLLVTPQQGNSEPVVQDLAQLVEEATGVPLPFQKLIFKGKSLKEMETPLSALGMQNGCRVMLIGEKSNPEEEVELKKLKDLEVSAEKIANHLQELNKELSGIQQGFLAKELQAEALCKLDRKVKATIEQFMKILEEIDTMVLPEQFKDSRLKRKNLVKKVQVFLAECDTVEQYICQETERLQSTNLALAE.

Residues 1–112 (MAGRSAARRP…KNVTGTQVEE (112 aa)) are disordered. Residues 26 to 39 (PAREPRQSESRAER) are compositionally biased toward basic and acidic residues. Polar residues-rich tracts occupy residues 80–91 (SSQSEKVGSSSR) and 102–111 (SKNVTGTQVE). 7 repeat units span residues 103 to 108 (KNVTGT), 111 to 116 (EEVTKI), 117 to 122 (EEATQT), 123 to 128 (EEVTVA), 129 to 134 (EEVTQT), 141 to 146 (EEMVQT), and 147 to 152 (EEMETP). The interval 111 to 209 (EEVTKIEEAT…LIFKGKSLKE (99 aa)) is 7 X 6 AA tandem repeat of E-E-X(4). The interval 132–151 (TQTDNMAKTEEMVQTEEMET) is disordered. Residues 154–234 (LSVIVTHSNE…VMLIGEKSNP (81 aa)) form the Ubiquitin-like domain. The segment at 182 to 229 (DLAQLVEEATGVPLPFQKLIFKGKSLKEMETPLSALGMQNGCRVMLIG) is interaction with HSPA8. The tract at residues 226 to 355 (MLIGEKSNPE…LQSTNLALAE (130 aa)) is interaction with PPP1R15A. Residues 256–336 (HLQELNKELS…VFLAECDTVE (81 aa)) form the BAG domain.

In terms of assembly, homodimer. Forms a heteromeric complex with HSP70/HSC70. Binds to the ATPase domain of HSP/HSC70 chaperones. Interacts with NR3C1. Interacts with the N-terminal region of MAPRE2. Interacts with PPP1R15A. Interacts with BCL2 in an ATP-dependent manner. Interacts with SIAH1, HSPA8 (via NBD), HSPA1A (via NBD) and HSPA1B (via NBD). Interacts with SIAH2. Interacts with ESR1; the interaction is promoted in the absence of estradiol (17-beta-estradiol/E2). Ubiquitinated; mediated by SIAH1 or SIAH2 and leading to its subsequent proteasomal degradation. As to expression, isoform 2 is expressed in the heart, lung, kidney and spinal cord. Isoform 1 and isoform 2 are expressed in hematopoietic cell lines. The levels of isoform 2 are relatively constant in all the cell lines examined while the levels of isoform 1 are more variable (at protein level). Isoform 1 is expressed in the lung and kidney. Isoform 2 is expressed in various tissues, with highest levels in testis and stomach.

The protein localises to the nucleus. Its subcellular location is the cytoplasm. Functionally, co-chaperone for HSP70 and HSC70 chaperone proteins. Acts as a nucleotide-exchange factor (NEF) promoting the release of ADP from the HSP70 and HSC70 proteins thereby triggering client/substrate protein release. Nucleotide release is mediated via its binding to the nucleotide-binding domain (NBD) of HSPA8/HSC70 where as the substrate release is mediated via its binding to the substrate-binding domain (SBD) of HSPA8/HSC70. Inhibits the pro-apoptotic function of PPP1R15A, and has anti-apoptotic activity. Markedly increases the anti-cell death function of BCL2 induced by various stimuli. Involved in the STUB1-mediated proteasomal degradation of ESR1 in response to age-related circulating estradiol (17-beta-estradiol/E2) decline, thereby promotes neuronal apoptosis in response to ischemic reperfusion injury. The chain is BAG family molecular chaperone regulator 1 (Bag1) from Mus musculus (Mouse).